Consider the following 366-residue polypeptide: Mitogen-activated protein kinase 13 (366 aa).

The Protein kinase domain occupies 25 to 308 (YVSLTHIGSG…ASQALAHPFF (284 aa)). An ATP-binding site is contributed by 31–39 (IGSGAYGSV). At S47 the chain carries Phosphoserine. Residue K54 participates in ATP binding. Residue D150 is the Proton acceptor of the active site. T180 carries the phosphothreonine; by MAP2K3, MAP2K4, MAP2K6 and MAP2K7 modification. Positions 180–182 (TGY) match the TXY motif. The residue at position 182 (Y182) is a Phosphotyrosine; by MAP2K3, MAP2K4, MAP2K6 and MAP2K7. S350 carries the phosphoserine modification.

The protein belongs to the protein kinase superfamily. CMGC Ser/Thr protein kinase family. MAP kinase subfamily. In terms of assembly, interacts with MAPK8IP2. Mg(2+) serves as cofactor. Post-translationally, dually phosphorylated on Thr-180 and Tyr-182 by MAP2K3/MKK3, MAP2K4/MKK4, MAP2K6/MKK6 and MAP2K7/MKK7, which activates the enzyme. Dephosphorylated by dual specificity phosphatase DUSP1.

The catalysed reaction is L-seryl-[protein] + ATP = O-phospho-L-seryl-[protein] + ADP + H(+). The enzyme catalyses L-threonyl-[protein] + ATP = O-phospho-L-threonyl-[protein] + ADP + H(+). With respect to regulation, activated by phosphorylation on threonine and tyrosine by dual specificity kinases, MAP2K3/MKK3 MAP2K6/MKK6, MAP2K4/MKK4 and MAP2K7/MKK7. Activation by ultraviolet radiation, hyperosmotic shock, anisomycin or by TNF-alpha is mediated by MAP2K3/MKK3. Inhibited by dual specificity phosphatase DUSP1. In terms of biological role, serine/threonine kinase which acts as an essential component of the MAP kinase signal transduction pathway. MAPK13 is one of the four p38 MAPKs which play an important role in the cascades of cellular responses evoked by extracellular stimuli such as pro-inflammatory cytokines or physical stress leading to direct activation of transcription factors such as ELK1 and ATF2. Accordingly, p38 MAPKs phosphorylate a broad range of proteins and it has been estimated that they may have approximately 200 to 300 substrates each. MAPK13 is one of the less studied p38 MAPK isoforms. Some of the targets are downstream kinases such as MAPKAPK2, which are activated through phosphorylation and further phosphorylate additional targets. Plays a role in the regulation of protein translation by phosphorylating and inactivating EEF2K. Involved in cytoskeletal remodeling through phosphorylation of MAPT and STMN1. Mediates UV irradiation induced up-regulation of the gene expression of CXCL14. Plays an important role in the regulation of epidermal keratinocyte differentiation, apoptosis and skin tumor development. Phosphorylates the transcriptional activator MYB in response to stress which leads to rapid MYB degradation via a proteasome-dependent pathway. MAPK13 also phosphorylates and down-regulates PRKD1 during regulation of insulin secretion in pancreatic beta cells. The polypeptide is Mitogen-activated protein kinase 13 (MAPK13) (Bos taurus (Bovine)).